The chain runs to 398 residues: NADH-quinone oxidoreductase subunit D (398 aa).

It belongs to the complex I 49 kDa subunit family. NDH-1 is composed of 14 different subunits. Subunits NuoB, C, D, E, F, and G constitute the peripheral sector of the complex.

The protein localises to the cell inner membrane. The enzyme catalyses a quinone + NADH + 5 H(+)(in) = a quinol + NAD(+) + 4 H(+)(out). Functionally, NDH-1 shuttles electrons from NADH, via FMN and iron-sulfur (Fe-S) centers, to quinones in the respiratory chain. The immediate electron acceptor for the enzyme in this species is believed to be ubiquinone. Couples the redox reaction to proton translocation (for every two electrons transferred, four hydrogen ions are translocated across the cytoplasmic membrane), and thus conserves the redox energy in a proton gradient. The sequence is that of NADH-quinone oxidoreductase subunit D from Rhodospirillum centenum (strain ATCC 51521 / SW).